Reading from the N-terminus, the 263-residue chain is Isatin hydrolase (263 aa).

A substrate-binding site is contributed by 62 to 66 (FFAWN). Mn(2+) is bound by residues histidine 73, histidine 77, and aspartate 79. The Proton donor/acceptor role is filled by histidine 83. Histidine 212 contributes to the substrate binding site.

The protein belongs to the Cyclase 1 superfamily. As to quaternary structure, homodimer. Mn(2+) serves as cofactor.

It carries out the reaction isatin + H2O = isatinate + H(+). Inhibited by thioisatinate. Involved in the degradation of the plant hormone indole-3-acetic acid (IAA). Catalyzes the hydrolysis of the cyclic amide bond (lactam) of isatin (1H-indole-2,3-dione) to yield isatinate (2-(2-aminophenyl)-2-oxoacetate). The protein is Isatin hydrolase of Roseibium aggregatum (strain ATCC 25650 / DSM 13394 / JCM 20685 / NBRC 16684 / NCIMB 2208 / IAM 12614 / B1) (Stappia aggregata).